The following is a 361-amino-acid chain: Chorismate synthase (361 aa).

Position 48 (Arg-48) interacts with NADP(+). Residues 125 to 127 (RSS), 238 to 239 (NA), Gly-278, 293 to 297 (KPTSS), and Arg-319 each bind FMN.

The protein belongs to the chorismate synthase family. Homotetramer. It depends on FMNH2 as a cofactor.

It carries out the reaction 5-O-(1-carboxyvinyl)-3-phosphoshikimate = chorismate + phosphate. The protein operates within metabolic intermediate biosynthesis; chorismate biosynthesis; chorismate from D-erythrose 4-phosphate and phosphoenolpyruvate: step 7/7. Its function is as follows. Catalyzes the anti-1,4-elimination of the C-3 phosphate and the C-6 proR hydrogen from 5-enolpyruvylshikimate-3-phosphate (EPSP) to yield chorismate, which is the branch point compound that serves as the starting substrate for the three terminal pathways of aromatic amino acid biosynthesis. This reaction introduces a second double bond into the aromatic ring system. This is Chorismate synthase from Vibrio anguillarum (strain ATCC 68554 / 775) (Listonella anguillarum).